The primary structure comprises 244 residues: uncharacterized protein (244 aa).

Helical transmembrane passes span 22-42 (IMLQ…LLSF), 63-83 (FIFS…WGLT), 110-130 (VILL…EAFA), 140-160 (IMSL…NLTV), 186-206 (GVLF…IFQL), and 213-233 (AVFD…MLVV).

The protein localises to the cell membrane. This is an uncharacterized protein from Haemophilus influenzae (strain ATCC 51907 / DSM 11121 / KW20 / Rd).